The sequence spans 866 residues: Pentatricopeptide repeat-containing protein At1g15510, chloroplastic (866 aa).

The N-terminal 52 residues, 1-52 (MASSAQSPHFYLNPGKSNSFQSKAYKQRNVNFYWNFGIRRLFLRKSQGLSVL), are a transit peptide targeting the chloroplast. PPR repeat units lie at residues 58–92 (STHF…RVAV), 93–123 (DEDV…ALSS), 128–158 (GVEL…MSER), 159–194 (NLFS…GVKP), 195–229 (DVYT…GYEL), 230–260 (DIDV…MPRR), 261–295 (DIIS…SVDP), 296–330 (DLMT…GFAV), 331–365 (DISV…DIVS), 366–396 (WTTM…SVKP), 397–431 (DEIT…RLIS), 432–466 (YVIV…NVIS), 467–493 (WTSI…MKMT), 497–531 (NAIT…GVGL), 532–561 (DDFL…SQKK), 562–596 (DVTS…RVRP), 597–631 (DEIT…GVTP), and 632–662 (NLKH…MPVT). Residues 667–742 (VWGALLNACR…DAGCSWVEVK (76 aa)) are type E motif. The interval 743–773 (GKVHAFLSDDKYHPQTKEINTVLEGFYEKMS) is type E(+) motif. A type DYW motif region spans residues 774-866 (EVGLTKISES…FKDGECSCGD (93 aa)).

This sequence belongs to the PPR family. PCMP-H subfamily.

The protein localises to the plastid. Its subcellular location is the chloroplast. Its function is as follows. Regulates the RNA editing of the chloroplast transcript accD, and is essential for the early stages of chloroplast biogenesis. Required for the RNA editing of the chloroplast transcript ndhF. This Arabidopsis thaliana (Mouse-ear cress) protein is Pentatricopeptide repeat-containing protein At1g15510, chloroplastic (PCMP-H73).